We begin with the raw amino-acid sequence, 753 residues long: MAAAPPPPAKNQGKAKQHVTGARFRQRKISVKQPLTIYKQRDLPTLDSNELEPSQVHHLNSNASSSSTQQPRDLHAVETGVDKNEEEEVHLQQVINAAQKALLGSKKEEKSSDMYIPTPDASRIWPEAHKYYKDQKFKQPETYIKFSATVEDTVGVEYNMDEVDEKFYRETLCKYYPKKKNKSDENNRKCTELEFETICDKLEKTIEARQPFLSMDPSNILSYEELSSYIVDQFKSAVKTSNPYIVTNGGNLEYISTTALKERLSKEIKYEPFVTIFDKNQMSTSAVRPIPKLFELFGRPVYDHWKERKIERKGKTIQPTLKFEDPNSNEKENDNDPYICFRRREFRQARKTRRADTIGAERIRSMQKSLHRARDLIMSVSEREILKLDNFQAEHELFKARCATKACKRELNIKGDEYLFFPHKKKKIVRTEDEEREKKREKKKQDQELALKQQQALQQQQQQPPQPPQQAPSKQDGTSTSQPYVKLPPAKVPDMDLVTVSLVLKEKNETIKRAVLEKLRKRKEHDKGFINLTDDPYQPFFDISTNRAEELSHIPYSSIAATHYHQFNTSNYMNDQLKKLLEEKKPLPGVKTFLGSNGELVPSKAFPHLSSLLEEKYKATSGYIERLLQSVETQDFSSYTNGFKDVEPKETNEPVMAFPQRIRRRVGRAGRVFLDHQQEYPQPNFQQDTDRVGGIPDVYCKEDAIKRLQSKWKFDTEYKTTEPFSLDPSKLNGISPSTQSIRFGSMLLNRTRK.

2 disordered regions span residues Met-1–His-75 and Val-429–Ala-490. The segment covering Leu-46–Pro-71 has biased composition (polar residues). Basic and acidic residues predominate over residues Val-429–Leu-449. A compositionally biased stretch (low complexity) spans Ala-450–Gln-463.

Belongs to the enhancer of polycomb family. In terms of assembly, component of the NuA4 histone acetyltransferase complex.

It localises to the nucleus. Functionally, component of the NuA4 histone acetyltransferase complex which is involved in transcriptional activation of selected genes principally by acetylation of nucleosomal histone H4 and H2A. The NuA4 complex is also involved in DNA repair. Involved in gene silencing by neighboring heterochromatin, blockage of the silencing spreading along the chromosome, and required for cell cycle progression through G2/M. This is Enhancer of polycomb-like protein 1 (EPL1) from Candida albicans (strain SC5314 / ATCC MYA-2876) (Yeast).